We begin with the raw amino-acid sequence, 327 residues long: Surface protein P12p (327 aa).

2 consecutive 6-Cys domains span residues 21–168 (NIEI…LKKN) and 169–304 (IIFG…FSNY). Disulfide bonds link cysteine 25-cysteine 60, cysteine 74-cysteine 144, cysteine 93-cysteine 142, cysteine 173-cysteine 208, cysteine 223-cysteine 285, and cysteine 234-cysteine 283. Residues asparagine 246, asparagine 264, and asparagine 298 are each glycosylated (N-linked (GlcNAc...) asparagine).

The protein localises to the cell surface. It is found in the cell membrane. This chain is Surface protein P12p (P12p), found in Plasmodium berghei (strain Anka).